Consider the following 303-residue polypeptide: Recombination-associated protein RdgC (303 aa).

This sequence belongs to the RdgC family.

Its subcellular location is the cytoplasm. It is found in the nucleoid. In terms of biological role, may be involved in recombination. The sequence is that of Recombination-associated protein RdgC from Shewanella loihica (strain ATCC BAA-1088 / PV-4).